The chain runs to 275 residues: Homeobox-leucine zipper protein ATHB-17 (275 aa).

The interval 95–143 (SSPLSDEGSGGGRDQLRLDMNRLPSSEDGDDEEFSHDDGSAPPRKKLRL) is disordered. Positions 136-195 (PPRKKLRLTREQSRLLEDSFRQNHTLNPKQKEVLAKHLMLRPRQIEVWFQNRRARSKLKQ) form a DNA-binding region, homeobox. A leucine-zipper region spans residues 203 to 224 (LKRWFGSLTEENHRLHREVEEL). Positions 252–275 (AASPSRAVVPVPAKKTFPPQERDR) are disordered.

This sequence belongs to the HD-ZIP homeobox family. Class II subfamily.

It localises to the nucleus. Its function is as follows. Probable transcription factor. This Arabidopsis thaliana (Mouse-ear cress) protein is Homeobox-leucine zipper protein ATHB-17 (ATHB-17).